A 314-amino-acid chain; its full sequence is Nucleotide-binding protein CE1710 (314 aa).

The interval 1 to 29 (MNQTPGSTVPETATPVTSPASSPSAPETT) is disordered. The span at 7–29 (STVPETATPVTSPASSPSAPETT) shows a compositional bias: low complexity. 37 to 44 (GMSGAGLS) is a binding site for ATP. 88–91 (DVRS) is a binding site for GTP.

This sequence belongs to the RapZ-like family.

Displays ATPase and GTPase activities. This Corynebacterium efficiens (strain DSM 44549 / YS-314 / AJ 12310 / JCM 11189 / NBRC 100395) protein is Nucleotide-binding protein CE1710.